The following is a 503-amino-acid chain: Probable cytosol aminopeptidase (503 aa).

K270 and D275 together coordinate Mn(2+). K282 is an active-site residue. Mn(2+) contacts are provided by D293, D352, and E354. R356 is a catalytic residue.

Belongs to the peptidase M17 family. Mn(2+) is required as a cofactor.

It is found in the cytoplasm. It catalyses the reaction Release of an N-terminal amino acid, Xaa-|-Yaa-, in which Xaa is preferably Leu, but may be other amino acids including Pro although not Arg or Lys, and Yaa may be Pro. Amino acid amides and methyl esters are also readily hydrolyzed, but rates on arylamides are exceedingly low.. The enzyme catalyses Release of an N-terminal amino acid, preferentially leucine, but not glutamic or aspartic acids.. Functionally, presumably involved in the processing and regular turnover of intracellular proteins. Catalyzes the removal of unsubstituted N-terminal amino acids from various peptides. The sequence is that of Probable cytosol aminopeptidase from Escherichia fergusonii (strain ATCC 35469 / DSM 13698 / CCUG 18766 / IAM 14443 / JCM 21226 / LMG 7866 / NBRC 102419 / NCTC 12128 / CDC 0568-73).